We begin with the raw amino-acid sequence, 341 residues long: Ketol-acid reductoisomerase (NADP(+)) (341 aa).

Positions 2 to 181 constitute a KARI N-terminal Rossmann domain; it reads AKVYYNGDAN…GAARAGVLET (180 aa). Residues 25–28, R48, S52, and 82–85 contribute to the NADP(+) site; these read YGSQ and DEKQ. Residue H107 is part of the active site. G133 serves as a coordination point for NADP(+). The KARI C-terminal knotted domain maps to 182–327; it reads TFKEETETDL…RELRSMMPFV (146 aa). The Mg(2+) site is built by D190, E194, E226, and E230. Substrate is bound at residue S251.

This sequence belongs to the ketol-acid reductoisomerase family. It depends on Mg(2+) as a cofactor.

It carries out the reaction (2R)-2,3-dihydroxy-3-methylbutanoate + NADP(+) = (2S)-2-acetolactate + NADPH + H(+). It catalyses the reaction (2R,3R)-2,3-dihydroxy-3-methylpentanoate + NADP(+) = (S)-2-ethyl-2-hydroxy-3-oxobutanoate + NADPH + H(+). The protein operates within amino-acid biosynthesis; L-isoleucine biosynthesis; L-isoleucine from 2-oxobutanoate: step 2/4. It functions in the pathway amino-acid biosynthesis; L-valine biosynthesis; L-valine from pyruvate: step 2/4. Functionally, involved in the biosynthesis of branched-chain amino acids (BCAA). Catalyzes an alkyl-migration followed by a ketol-acid reduction of (S)-2-acetolactate (S2AL) to yield (R)-2,3-dihydroxy-isovalerate. In the isomerase reaction, S2AL is rearranged via a Mg-dependent methyl migration to produce 3-hydroxy-3-methyl-2-ketobutyrate (HMKB). In the reductase reaction, this 2-ketoacid undergoes a metal-dependent reduction by NADPH to yield (R)-2,3-dihydroxy-isovalerate. The protein is Ketol-acid reductoisomerase (NADP(+)) of Geobacillus kaustophilus (strain HTA426).